The chain runs to 184 residues: dCTP deaminase (184 aa).

DCTP contacts are provided by residues Lys107–Arg112, Thr131–Glu133, Gln152, Tyr166, and Gln176. The active-site Proton donor/acceptor is Glu133.

It belongs to the dCTP deaminase family. As to quaternary structure, homotrimer.

The enzyme catalyses dCTP + H2O + H(+) = dUTP + NH4(+). The protein operates within pyrimidine metabolism; dUMP biosynthesis; dUMP from dCTP (dUTP route): step 1/2. In terms of biological role, catalyzes the deamination of dCTP to dUTP. The polypeptide is dCTP deaminase (Rhizorhabdus wittichii (strain DSM 6014 / CCUG 31198 / JCM 15750 / NBRC 105917 / EY 4224 / RW1) (Sphingomonas wittichii)).